A 115-amino-acid polypeptide reads, in one-letter code: MNMLLVLLVNSILSLLLILIAFWLPQLNMYNEKANSYECGFDPMGSARLPFSMKFFLVAITFLLFDLEIALLLPLPWAIQMTNINTMTLTSFILISVLALGLAYEWLQKGLEWTE.

3 consecutive transmembrane segments (helical) span residues 4 to 24, 55 to 75, and 87 to 107; these read LLVLLVNSILSLLLILIAFWL, FFLVAITFLLFDLEIALLLPL, and MTLTSFILISVLALGLAYEWL.

It belongs to the complex I subunit 3 family. Core subunit of respiratory chain NADH dehydrogenase (Complex I) which is composed of 45 different subunits. Interacts with TMEM186. Interacts with TMEM242.

It localises to the mitochondrion inner membrane. The enzyme catalyses a ubiquinone + NADH + 5 H(+)(in) = a ubiquinol + NAD(+) + 4 H(+)(out). Its function is as follows. Core subunit of the mitochondrial membrane respiratory chain NADH dehydrogenase (Complex I) which catalyzes electron transfer from NADH through the respiratory chain, using ubiquinone as an electron acceptor. Essential for the catalytic activity of complex I. The polypeptide is NADH-ubiquinone oxidoreductase chain 3 (Peromyscus eremicus (Cactus mouse)).